The primary structure comprises 257 residues: Ribosomal RNA small subunit methyltransferase A (257 aa).

Asparagine 12, leucine 14, glycine 39, glutamate 60, aspartate 85, and asparagine 105 together coordinate S-adenosyl-L-methionine.

It belongs to the class I-like SAM-binding methyltransferase superfamily. rRNA adenine N(6)-methyltransferase family. RsmA subfamily.

The protein resides in the cytoplasm. The enzyme catalyses adenosine(1518)/adenosine(1519) in 16S rRNA + 4 S-adenosyl-L-methionine = N(6)-dimethyladenosine(1518)/N(6)-dimethyladenosine(1519) in 16S rRNA + 4 S-adenosyl-L-homocysteine + 4 H(+). In terms of biological role, specifically dimethylates two adjacent adenosines (A1518 and A1519) in the loop of a conserved hairpin near the 3'-end of 16S rRNA in the 30S particle. May play a critical role in biogenesis of 30S subunits. The polypeptide is Ribosomal RNA small subunit methyltransferase A (Methylococcus capsulatus (strain ATCC 33009 / NCIMB 11132 / Bath)).